The sequence spans 62 residues: Venom peptide SjAPI-2 (62 aa).

5 disulfide bridges follow: Cys4–Cys40, Cys14–Cys36, Cys18–Cys32, Cys22–Cys60, and Cys42–Cys54. The region spanning 4–60 (CRISGEVFTWCGTTCPLTCENFRNPPKHCPQGCFVGCMCRRGLVRHRNGRCVRPPRC) is the TIL domain.

This sequence belongs to the serine protease inhibitor-like (TIL domain-containing) family. Expressed by the venom gland.

The protein localises to the secreted. In terms of biological role, serine protease inhibitor. The polypeptide is Venom peptide SjAPI-2 (Scorpiops jendeki (Scorpion)).